The sequence spans 141 residues: Ribosomal RNA large subunit methyltransferase H (141 aa).

Gly88 serves as a coordination point for S-adenosyl-L-methionine.

It belongs to the RNA methyltransferase RlmH family. As to quaternary structure, homodimer.

It localises to the cytoplasm. The enzyme catalyses pseudouridine(1915) in 23S rRNA + S-adenosyl-L-methionine = N(3)-methylpseudouridine(1915) in 23S rRNA + S-adenosyl-L-homocysteine + H(+). Its function is as follows. Specifically methylates the pseudouridine at position 1915 (m3Psi1915) in 23S rRNA. The chain is Ribosomal RNA large subunit methyltransferase H from Novosphingobium aromaticivorans (strain ATCC 700278 / DSM 12444 / CCUG 56034 / CIP 105152 / NBRC 16084 / F199).